Here is a 498-residue protein sequence, read N- to C-terminus: Probable cytosol aminopeptidase (498 aa).

Mn(2+) contacts are provided by Lys-269 and Asp-274. Residue Lys-281 is part of the active site. The Mn(2+) site is built by Asp-292, Asp-351, and Glu-353. The active site involves Arg-355.

Belongs to the peptidase M17 family. It depends on Mn(2+) as a cofactor.

It localises to the cytoplasm. The enzyme catalyses Release of an N-terminal amino acid, Xaa-|-Yaa-, in which Xaa is preferably Leu, but may be other amino acids including Pro although not Arg or Lys, and Yaa may be Pro. Amino acid amides and methyl esters are also readily hydrolyzed, but rates on arylamides are exceedingly low.. It catalyses the reaction Release of an N-terminal amino acid, preferentially leucine, but not glutamic or aspartic acids.. In terms of biological role, presumably involved in the processing and regular turnover of intracellular proteins. Catalyzes the removal of unsubstituted N-terminal amino acids from various peptides. The chain is Probable cytosol aminopeptidase from Glaesserella parasuis serovar 5 (strain SH0165) (Haemophilus parasuis).